A 448-amino-acid polypeptide reads, in one-letter code: Serine--tRNA ligase (448 aa).

255-257 (TSE) is an L-serine binding site. 286–288 (RSE) lines the ATP pocket. Glutamate 309 is an L-serine binding site. 373-376 (EISS) contacts ATP. An L-serine-binding site is contributed by serine 408.

It belongs to the class-II aminoacyl-tRNA synthetase family. Type-1 seryl-tRNA synthetase subfamily. Homodimer. The tRNA molecule binds across the dimer.

Its subcellular location is the cytoplasm. The catalysed reaction is tRNA(Ser) + L-serine + ATP = L-seryl-tRNA(Ser) + AMP + diphosphate + H(+). It catalyses the reaction tRNA(Sec) + L-serine + ATP = L-seryl-tRNA(Sec) + AMP + diphosphate + H(+). The protein operates within aminoacyl-tRNA biosynthesis; selenocysteinyl-tRNA(Sec) biosynthesis; L-seryl-tRNA(Sec) from L-serine and tRNA(Sec): step 1/1. Functionally, catalyzes the attachment of serine to tRNA(Ser). Is also able to aminoacylate tRNA(Sec) with serine, to form the misacylated tRNA L-seryl-tRNA(Sec), which will be further converted into selenocysteinyl-tRNA(Sec). The protein is Serine--tRNA ligase of Bordetella petrii (strain ATCC BAA-461 / DSM 12804 / CCUG 43448).